Here is a 207-residue protein sequence, read N- to C-terminus: Sodium/potassium-transporting ATPase subunit beta-1-interacting protein 1 (207 aa).

A run of 3 helical transmembrane segments spans residues 2–22 (GRCS…AAAL), 35–55 (APIL…LGTL), and 62–82 (LILY…IICF). N-linked (GlcNAc...) asparagine glycosylation is present at Asn100. A helical transmembrane segment spans residues 147-167 (ALSSALQIFLALFGFVYACYV).

This sequence belongs to the NKAIN family. In terms of assembly, interacts with atp1b1 C-terminus.

It localises to the cell membrane. This chain is Sodium/potassium-transporting ATPase subunit beta-1-interacting protein 1 (nkain1), found in Xenopus tropicalis (Western clawed frog).